The sequence spans 581 residues: Zinc metalloproteinase nas-36 (581 aa).

Positions Met1 to Arg95 are excised as a propeptide. Asn67 carries an N-linked (GlcNAc...) asparagine glycan. Positions Ala97–Lys290 constitute a Peptidase M12A domain. 5 disulfides stabilise this stretch: Cys137/Cys289, Cys159/Cys178, Cys293/Cys313, Cys315/Cys324, and Cys336/Cys364. His186 is a Zn(2+) binding site. The active site involves Glu187. 2 residues coordinate Zn(2+): His190 and His196. The region spanning Asn285–Glu325 is the EGF-like domain. Positions Cys336–Thr449 constitute a CUB domain. Asn418 carries an N-linked (GlcNAc...) asparagine glycan. The TSP type-1 domain occupies Asn474–Pro523. Cystine bridges form between Cys486–Cys517, Cys490–Cys522, and Cys502–Cys507.

It depends on Zn(2+) as a cofactor.

The protein resides in the secreted. Inhibited by 1,10-phenanthroline. In terms of biological role, metalloprotease. Involved in molting, a process during larval stages in which a new cuticle is formed and the old cuticle is shed. This chain is Zinc metalloproteinase nas-36, found in Brugia malayi (Filarial nematode worm).